Here is a 90-residue protein sequence, read N- to C-terminus: uncharacterized protein (90 aa).

This is an uncharacterized protein from Treponema pallidum (strain Nichols).